Reading from the N-terminus, the 425-residue chain is MNTLNDSLTAFDPDIAALIDGELRRQESGLEMIASENYAPLAVMQAQGSVLTNKYAEGYPGRRYYGGCEFVDGVEQLAIDRVKALFGAEYANVQPHSGATANAATMHALLNPGDTILGLSLAHGGHLTHGMRINFSGKLYHATAYEVSKEDYLVDMDAVAEAARTHRPKMIIAGWSAYPRQLDFARFRAIADEVDAVLMVDMAHFAGLVAAGVHPSPVPHAHVVTSTTHKTLGGPRGGIILCNDPAIAKKINSAVFPGQQGGPLEHVIAAKATAFKMAAQPEFAQRQQRCLDGARILAGRLTQPDVAERGIAVLTGGTDVHLVLVDLRDAELDGQQAEDRLAAVDITVNRNAVPFDPRPPMITSGLRIGTPALAARGFSHNDFRAVADLIAAALTATNDDQLGPLRAQVQRLAARYPLYPELHRT.

(6S)-5,6,7,8-tetrahydrofolate is bound by residues Leu-121 and 125-127; that span reads GHL. Position 230 is an N6-(pyridoxal phosphate)lysine (Lys-230).

Belongs to the SHMT family. As to quaternary structure, homodimer. It depends on pyridoxal 5'-phosphate as a cofactor.

It is found in the cytoplasm. It carries out the reaction (6R)-5,10-methylene-5,6,7,8-tetrahydrofolate + glycine + H2O = (6S)-5,6,7,8-tetrahydrofolate + L-serine. The protein operates within one-carbon metabolism; tetrahydrofolate interconversion. It participates in amino-acid biosynthesis; glycine biosynthesis; glycine from L-serine: step 1/1. Its function is as follows. Catalyzes the reversible interconversion of serine and glycine with tetrahydrofolate (THF) serving as the one-carbon carrier. This reaction serves as the major source of one-carbon groups required for the biosynthesis of purines, thymidylate, methionine, and other important biomolecules. Also exhibits THF-independent aldolase activity toward beta-hydroxyamino acids, producing glycine and aldehydes, via a retro-aldol mechanism. The protein is Serine hydroxymethyltransferase 2 of Mycobacterium tuberculosis (strain CDC 1551 / Oshkosh).